The primary structure comprises 76 residues: Acyl carrier protein (76 aa).

Residues Lys2–Asn76 enclose the Carrier domain. At Ser37 the chain carries O-(pantetheine 4'-phosphoryl)serine.

This sequence belongs to the acyl carrier protein (ACP) family. Post-translationally, 4'-phosphopantetheine is transferred from CoA to a specific serine of apo-ACP by AcpS. This modification is essential for activity because fatty acids are bound in thioester linkage to the sulfhydryl of the prosthetic group.

The protein localises to the plastid. It localises to the chloroplast. Its pathway is lipid metabolism; fatty acid biosynthesis. Its function is as follows. Carrier of the growing fatty acid chain in fatty acid biosynthesis. The polypeptide is Acyl carrier protein (Phaeodactylum tricornutum (strain CCAP 1055/1)).